We begin with the raw amino-acid sequence, 393 residues long: Major outer membrane protein P.IA (393 aa).

The N-terminal stretch at 1–19 (MRKKLTALVLSALPLAAVA) is a signal peptide.

This sequence belongs to the Gram-negative porin family. In terms of assembly, homotrimer.

The protein localises to the cell outer membrane. Serves as a slightly cation selective porin. Major antigen on the gonococcal cell surface and it may have pathogenic properties in addition to its porin activity. This is Major outer membrane protein P.IA (porA) from Neisseria meningitidis serogroup C.